Reading from the N-terminus, the 303-residue chain is Target of rapamycin complex subunit LST8 (303 aa).

WD repeat units follow at residues 1 to 27 (MSVILVSAGYDHTIRFWEALTGVCSRT), 30 to 68 (HSDSQVNRLEITNDKKLLATAGHQNVRLYDIRTTNPNPV), 73 to 112 (GHRGNVTSVSFQQDNRWMVTSSEDGTIKVWDVRSPSIPRN), 114 to 153 (KHNAPVNEVVIHPNQGELISCDRDGNIRIWDLGENQCTHQ), 157 to 196 (EDDTSLQSLSMASDGSMLAAANTKGNCYVWEMPNHTDASH), 205 to 244 (AHSTYITRILLSSDVKHLATCSADHTARVWSIDDDFKLET), and 248 to 287 (GHQRWVWDCAFSADSAYLVTASSDHYVRLWDLSTREIVRQ).

Belongs to the WD repeat LST8 family. The target of rapamycin complex 1 (TORC1) is composed of at least KOG1, LST8, TCO89 and either TOR1 (TORC1-A) or TOR2 (TORC1-B). TORC1 binds to and is inhibited by FKBP-rapamycin. Interacts with PIB2; following activation of PIB2 by glutamine or cysteine and as part of the TORC1 complex. The target of rapamycin complex 2 (TORC2) is composed of at least AVO1, AVO2, BIT61, LST8, TOR2 and TSC11. TORC2 forms a homodimer. Contrary to TORC1, TORC2 does not bind to and is not sensitive to FKBP-rapamycin. LST8 binds to the C-terminal kinase domain in TOR2.

The protein localises to the cell membrane. The protein resides in the vacuole membrane. Functionally, essential component of both TORC1 and TORC2. TORC1 regulates multiple cellular processes to control cell growth in response to environmental signals. Nutrient limitation and environmental stress signals cause inactivation of TORC1. Active TORC1 positively controls ribosome biogenesis via control of rRNA, ribosomal protein and tRNA gene expression, and rRNA processing. TORC1 positively controls protein biosynthesis by regulation of mRNA stability, translation initiation factor activity, and high-affinity amino acid permeases that serve to provide amino acids for use by the translation machinery. TORC1 also promotes growth by sequestering a number of nutrient and general stress-responsive transcription factors in the cytoplasm. TORC1 negatively controls macroautophagy, a process to recycle surplus cytoplasmic mass under nutrient starvation conditions. LST8 is involved in the negative regulation of transcription factors GLN3 and RTG1-RTG3, limiting the synthesis of alpha-ketoglutarate, glutamate and glutamine. LST8 is required for targeting of amino acid permeases (AAPs) to the plasma membrane. TORC2 regulates cell cycle-dependent polarization of the actin-cytoskeleton, cell wall integrity, and receptor endocytosis. TORC2 controls polarity of the actin cytoskeleton, which is required for orienting the secretory pathway toward discrete growth sites, via the RHO1/PKC1/MAPK cell integrity pathway. LST8 is involved in maintenance of cell wall integrity. LST8 modulates TOR2 kinase activity. The chain is Target of rapamycin complex subunit LST8 from Saccharomyces cerevisiae (strain ATCC 204508 / S288c) (Baker's yeast).